Consider the following 78-residue polypeptide: RNA-binding protein Hfq (78 aa).

The region spanning 10 to 69 (DPFLNALRKEHVPVSIYLVNGIKLQGHIESFDQYVVLLRNTVTQMVYKHAISTVVPARAV) is the Sm domain.

The protein belongs to the Hfq family. As to quaternary structure, homohexamer.

Functionally, RNA chaperone that binds small regulatory RNA (sRNAs) and mRNAs to facilitate mRNA translational regulation in response to envelope stress, environmental stress and changes in metabolite concentrations. Also binds with high specificity to tRNAs. In Herminiimonas arsenicoxydans, this protein is RNA-binding protein Hfq.